The chain runs to 574 residues: Serine/threonine-protein kinase B (574 aa).

The region spanning 34–301 (YQTLGLLGKG…VLDALEMPTY (268 aa)) is the Protein kinase domain. ATP-binding positions include 40–48 (LGKGGFGAT) and Lys65. Asp163 acts as the Proton acceptor in catalysis. The segment at 319–407 (GAGDEPATGI…GGSVGAGGID (89 aa)) is disordered. The span at 343–364 (TRFNTNVQPRDPSSTSLNTGIK) shows a compositional bias: polar residues. Pentapeptide repeat domains are found at residues 454 to 493 (QNLV…DFGK) and 504 to 543 (ANLS…NFSG).

This sequence belongs to the protein kinase superfamily. Ser/Thr protein kinase family. Autophosphorylated.

It carries out the reaction L-seryl-[protein] + ATP = O-phospho-L-seryl-[protein] + ADP + H(+). The catalysed reaction is L-threonyl-[protein] + ATP = O-phospho-L-threonyl-[protein] + ADP + H(+). Protein kinase required for cell motility, but not for phototaxis. This is Serine/threonine-protein kinase B (spkB) from Synechocystis sp. (strain ATCC 27184 / PCC 6803 / Kazusa).